The following is a 35-amino-acid chain: Purotoxin-1 (35 aa).

Intrachain disulfides connect C3–C16, C10–C21, C15–C32, and C23–C30.

Belongs to the neurotoxin 33 family. In terms of tissue distribution, expressed by the venom gland.

The protein localises to the secreted. Its function is as follows. Inhibits P2RX3 receptors. Has an analgesic effect in rat. Enhances the high-affinity desensitization of P2RX3 purinoceptors. At 50 nM, decreases the IC(50) for ambient ATP from 46.5 nM to 12.7 nM in mouse P2RX3. The sequence is that of Purotoxin-1 from Alopecosa marikovskyi (Wolf spider).